Consider the following 292-residue polypeptide: NAD kinase (292 aa).

Residue Asp73 is the Proton acceptor of the active site. Residues 73-74 (DG), 147-148 (NE), His158, Arg175, Asp177, 188-193 (TAYSLS), and Gln247 each bind NAD(+).

The protein belongs to the NAD kinase family. A divalent metal cation is required as a cofactor.

It is found in the cytoplasm. The enzyme catalyses NAD(+) + ATP = ADP + NADP(+) + H(+). In terms of biological role, involved in the regulation of the intracellular balance of NAD and NADP, and is a key enzyme in the biosynthesis of NADP. Catalyzes specifically the phosphorylation on 2'-hydroxyl of the adenosine moiety of NAD to yield NADP. The protein is NAD kinase of Salmonella choleraesuis (strain SC-B67).